The following is a 204-amino-acid chain: Tumor necrosis factor receptor superfamily member 26 (204 aa).

An N-terminal signal peptide occupies residues 1-19; it reads MTRLRLLLLLGLLLRVAVC. Over 20–164 the chain is Extracellular; sequence SVNTITLCKI…SQCFCFSKPL (145 aa). Cystine bridges form between cysteine 27/cysteine 38, cysteine 39/cysteine 52, cysteine 42/cysteine 61, cysteine 64/cysteine 79, cysteine 82/cysteine 95, cysteine 85/cysteine 103, cysteine 105/cysteine 120, cysteine 123/cysteine 135, and cysteine 126/cysteine 143. TNFR-Cys repeat units follow at residues 27–61, 63–103, and 104–143; these read CKIGEFKHENLCCLQCSAGTYLRNPCQENHNKSEC, PCDS…DRVC, and QCKQGTYCDSENCLERCHTCSSCPDGRVVRKCNATMDTVC. Asparagine 57 carries N-linked (GlcNAc...) asparagine glycosylation. Residue asparagine 136 is glycosylated (N-linked (GlcNAc...) asparagine). The chain crosses the membrane as a helical span at residues 165–185; that stretch reads GIVVIIAAFIIIIGAVIILIL. The Cytoplasmic portion of the chain corresponds to 186–204; the sequence is KIICYCKRGENIQLSSTML.

In terms of tissue distribution, expressed in thymus and spleen. Detectable levels in lung.

It localises to the membrane. The chain is Tumor necrosis factor receptor superfamily member 26 (Tnfrsf26) from Mus musculus (Mouse).